The chain runs to 539 residues: Probable methionine--tRNA ligase, mitochondrial (539 aa).

Positions 28–38 (FYVNAAPHLGH) match the 'HIGH' region motif. The 'KMSKS' region signature appears at 326–330 (KMSKS). Lys329 lines the ATP pocket.

The protein belongs to the class-I aminoacyl-tRNA synthetase family.

The protein resides in the mitochondrion matrix. It carries out the reaction tRNA(Met) + L-methionine + ATP = L-methionyl-tRNA(Met) + AMP + diphosphate. This is Probable methionine--tRNA ligase, mitochondrial from Schizosaccharomyces pombe (strain 972 / ATCC 24843) (Fission yeast).